The following is a 424-amino-acid chain: Probable serine/threonine-protein kinase PBL12 (424 aa).

The Protein kinase domain occupies 88–368 (FSRSNMLGEG…CEVVKVLESI (281 aa)). ATP contacts are provided by residues 94 to 102 (LGEGGFGPV) and Lys123. Asp218 acts as the Proton acceptor in catalysis.

The protein belongs to the protein kinase superfamily. Ser/Thr protein kinase family. Expressed specifically in roots.

It localises to the cell membrane. It carries out the reaction L-seryl-[protein] + ATP = O-phospho-L-seryl-[protein] + ADP + H(+). The catalysed reaction is L-threonyl-[protein] + ATP = O-phospho-L-threonyl-[protein] + ADP + H(+). Its function is as follows. May play a role in the signal transduction pathway of osmotic stress. May be involved in plant defense signaling. The protein is Probable serine/threonine-protein kinase PBL12 of Arabidopsis thaliana (Mouse-ear cress).